A 261-amino-acid chain; its full sequence is 1-(5-phosphoribosyl)-5-[(5-phosphoribosylamino)methylideneamino] imidazole-4-carboxamide isomerase (261 aa).

Aspartate 15 functions as the Proton acceptor in the catalytic mechanism. Aspartate 136 functions as the Proton donor in the catalytic mechanism.

Belongs to the HisA/HisF family.

Its subcellular location is the cytoplasm. The enzyme catalyses 1-(5-phospho-beta-D-ribosyl)-5-[(5-phospho-beta-D-ribosylamino)methylideneamino]imidazole-4-carboxamide = 5-[(5-phospho-1-deoxy-D-ribulos-1-ylimino)methylamino]-1-(5-phospho-beta-D-ribosyl)imidazole-4-carboxamide. It participates in amino-acid biosynthesis; L-histidine biosynthesis; L-histidine from 5-phospho-alpha-D-ribose 1-diphosphate: step 4/9. This Synechococcus sp. (strain JA-2-3B'a(2-13)) (Cyanobacteria bacterium Yellowstone B-Prime) protein is 1-(5-phosphoribosyl)-5-[(5-phosphoribosylamino)methylideneamino] imidazole-4-carboxamide isomerase.